Reading from the N-terminus, the 2291-residue chain is Spectrin beta chain (2291 aa).

Positions 1 to 271 (MTTDISIVRW…IITYVVTYYH (271 aa)) are actin-binding. 2 consecutive Calponin-homology (CH) domains span residues 50–154 (SVQK…LRFQ) and 169–274 (KSAK…HYFS). Spectrin repeat units follow at residues 300 to 408 (VHDY…ALRE), 420 to 521 (AARF…MRLE), 525 to 633 (QLQQ…RLEE), 636 to 739 (KLWQ…RLEN), 743 to 843 (YFQL…QRLL), 848 to 948 (LYKL…MDDL), 954 to 1057 (VQTF…KLEE), 1060 to 1166 (DLHR…VLLS), 1170 to 1272 (DQQL…EKLK), 1276 to 1376 (KLHE…GAML), 1386 to 1484 (QQTC…KALE), 1488 to 1591 (EAFQ…HLLE), 1594 to 1697 (KVQQ…RLNE), 1701 to 1802 (LFML…TQML), 1807 to 1909 (ELHK…QKLA), 1913 to 2015 (DLFR…ENLQ), and 2020 to 2089 (VYQF…KEMK). Residues 2097-2140 (EAERQRIKEEQEAKAASEAAEQAKREAERRDDVDVGASHDDSER) show a composition bias toward basic and acidic residues. A disordered region spans residues 2097 to 2152 (EAERQRIKEEQEAKAASEAAEQAKREAERRDDVDVGASHDDSERGGTPGAGEGHEG). The PH domain occupies 2147-2259 (GEGHEGYVTR…WVTSLKAQSD (113 aa)). Phosphoserine is present on Ser-2195. Residues 2262-2275 (AVAASRSQTLPATS) show a composition bias toward polar residues. The tract at residues 2262 to 2291 (AVAASRSQTLPATSQKDEPKRRSFFTLKKK) is disordered.

This sequence belongs to the spectrin family. In terms of assembly, native spectrin molecule is a tetramer composed of two antiparallel heterodimers joined head to head so that each end of the native molecule includes the C-terminus of the alpha subunit and the N-terminus of the beta subunit.

It localises to the cytoplasm. The protein resides in the cytoskeleton. Its subcellular location is the cell cortex. Its function is as follows. Spectrin is the major constituent of the cytoskeletal network underlying the erythrocyte plasma membrane. It associates with band 4.1 and actin to form the cytoskeletal superstructure of the erythrocyte plasma membrane. Interacts with calmodulin in a calcium-dependent manner. This Drosophila melanogaster (Fruit fly) protein is Spectrin beta chain (beta-Spec).